Here is a 331-residue protein sequence, read N- to C-terminus: Large ribosomal subunit protein uL3 (331 aa).

The protein belongs to the universal ribosomal protein uL3 family. In terms of assembly, part of the 50S ribosomal subunit. Forms a cluster with proteins L14 and L24e.

One of the primary rRNA binding proteins, it binds directly near the 3'-end of the 23S rRNA, where it nucleates assembly of the 50S subunit. This is Large ribosomal subunit protein uL3 from Thermoplasma volcanium (strain ATCC 51530 / DSM 4299 / JCM 9571 / NBRC 15438 / GSS1).